The following is a 1097-amino-acid chain: DNA-directed RNA polymerase subunit beta (1097 aa).

A disordered region spans residues 1072–1097 (QDVNPRRSTPSRPTYESLGVADYDED).

The protein belongs to the RNA polymerase beta chain family. In cyanobacteria the RNAP catalytic core is composed of 2 alpha, 1 beta, 1 beta', 1 gamma and 1 omega subunit. When a sigma factor is associated with the core the holoenzyme is formed, which can initiate transcription.

The catalysed reaction is RNA(n) + a ribonucleoside 5'-triphosphate = RNA(n+1) + diphosphate. Its function is as follows. DNA-dependent RNA polymerase catalyzes the transcription of DNA into RNA using the four ribonucleoside triphosphates as substrates. The protein is DNA-directed RNA polymerase subunit beta of Prochlorococcus marinus (strain MIT 9303).